We begin with the raw amino-acid sequence, 241 residues long: Uridylate kinase (241 aa).

ATP is bound at residue 12–15; the sequence is KLSG. The tract at residues 20-25 is involved in allosteric activation by GTP; it reads GDKGQG. Residue glycine 54 participates in UMP binding. Residues glycine 55 and arginine 59 each contribute to the ATP site. UMP contacts are provided by residues aspartate 74 and 135–142; that span reads TGSPYFST. Asparagine 163, tyrosine 169, and aspartate 172 together coordinate ATP.

Belongs to the UMP kinase family. In terms of assembly, homohexamer.

It is found in the cytoplasm. It carries out the reaction UMP + ATP = UDP + ADP. The protein operates within pyrimidine metabolism; CTP biosynthesis via de novo pathway; UDP from UMP (UMPK route): step 1/1. Its activity is regulated as follows. Allosterically activated by GTP. Inhibited by UTP. Catalyzes the reversible phosphorylation of UMP to UDP. The chain is Uridylate kinase from Leuconostoc mesenteroides subsp. mesenteroides (strain ATCC 8293 / DSM 20343 / BCRC 11652 / CCM 1803 / JCM 6124 / NCDO 523 / NBRC 100496 / NCIMB 8023 / NCTC 12954 / NRRL B-1118 / 37Y).